Reading from the N-terminus, the 262-residue chain is 3-methyl-2-oxobutanoate hydroxymethyltransferase (262 aa).

Mg(2+)-binding residues include Asp44 and Asp83. 3-methyl-2-oxobutanoate contacts are provided by residues 44–45 (DS), Asp83, and Lys111. Glu113 lines the Mg(2+) pocket. Glu180 acts as the Proton acceptor in catalysis.

The protein belongs to the PanB family. As to quaternary structure, homodecamer; pentamer of dimers. Requires Mg(2+) as cofactor.

It localises to the cytoplasm. It catalyses the reaction 3-methyl-2-oxobutanoate + (6R)-5,10-methylene-5,6,7,8-tetrahydrofolate + H2O = 2-dehydropantoate + (6S)-5,6,7,8-tetrahydrofolate. The protein operates within cofactor biosynthesis; (R)-pantothenate biosynthesis; (R)-pantoate from 3-methyl-2-oxobutanoate: step 1/2. Functionally, catalyzes the reversible reaction in which hydroxymethyl group from 5,10-methylenetetrahydrofolate is transferred onto alpha-ketoisovalerate to form ketopantoate. The chain is 3-methyl-2-oxobutanoate hydroxymethyltransferase from Alcanivorax borkumensis (strain ATCC 700651 / DSM 11573 / NCIMB 13689 / SK2).